The chain runs to 443 residues: Xaa-Pro dipeptidase (443 aa).

Residues Asp246, Asp257, His339, Glu384, and Glu423 each coordinate Mn(2+).

The protein belongs to the peptidase M24B family. Bacterial-type prolidase subfamily. Mn(2+) serves as cofactor.

It carries out the reaction Xaa-L-Pro dipeptide + H2O = an L-alpha-amino acid + L-proline. Its function is as follows. Splits dipeptides with a prolyl residue in the C-terminal position. This is Xaa-Pro dipeptidase from Shigella dysenteriae serotype 1 (strain Sd197).